The sequence spans 126 residues: Protein ApaG (126 aa).

The 125-residue stretch at 2-126 (DVIQPCIKIQ…FRLAIPNVLN (125 aa)) folds into the ApaG domain.

The sequence is that of Protein ApaG from Vibrio campbellii (strain ATCC BAA-1116).